The primary structure comprises 115 residues: Small ribosomal subunit protein bS16 (115 aa).

The disordered stretch occupies residues 81–115; sequence GLAPKPTYNEQPKKSAPKAKAQERAKAAADAAAAA.

This sequence belongs to the bacterial ribosomal protein bS16 family.

The protein is Small ribosomal subunit protein bS16 of Gluconobacter oxydans (strain 621H) (Gluconobacter suboxydans).